Reading from the N-terminus, the 415-residue chain is D-galactonate dehydratase family member RspA (415 aa).

Substrate-binding residues include asparagine 48 and histidine 133. Tyrosine 170 (proton donor/acceptor) is an active-site residue. Residue aspartate 223 coordinates Mg(2+). The active-site Proton donor/acceptor is histidine 225. 3 residues coordinate Mg(2+): glutamate 249, aspartate 250, and glutamate 275. Substrate-binding residues include glutamate 275, arginine 296, histidine 325, aspartate 329, and glutamate 352.

The protein belongs to the mandelate racemase/muconate lactonizing enzyme family. GalD subfamily. Requires Mg(2+) as cofactor.

It carries out the reaction D-mannonate = 2-dehydro-3-deoxy-D-gluconate + H2O. In terms of biological role, has low D-mannonate dehydratase activity (in vitro), suggesting that this is not a physiological substrate and that it has no significant role in D-mannonate degradation in vivo. Has no detectable activity with a panel of 70 other acid sugars (in vitro). The chain is D-galactonate dehydratase family member RspA (rspA) from Escherichia coli O6:H1 (strain CFT073 / ATCC 700928 / UPEC).